The primary structure comprises 503 residues: Cobyric acid synthase (503 aa).

Residues 245–447 (DISIAIIRLP…LHGIFDEISL (203 aa)) enclose the GATase cobBQ-type domain. The active-site Nucleophile is C326. Residue H439 is part of the active site.

It belongs to the CobB/CobQ family. CobQ subfamily.

It functions in the pathway cofactor biosynthesis; adenosylcobalamin biosynthesis. Catalyzes amidations at positions B, D, E, and G on adenosylcobyrinic A,C-diamide. NH(2) groups are provided by glutamine, and one molecule of ATP is hydrogenolyzed for each amidation. The protein is Cobyric acid synthase of Alkaliphilus metalliredigens (strain QYMF).